A 209-amino-acid chain; its full sequence is Uracil phosphoribosyltransferase (209 aa).

Residues Arg79, Arg104, and 131–139 (DPMLATGGS) contribute to the 5-phospho-alpha-D-ribose 1-diphosphate site. Uracil-binding positions include Ile194 and 199–201 (GDA). Position 200 (Asp200) interacts with 5-phospho-alpha-D-ribose 1-diphosphate.

The protein belongs to the UPRTase family. Mg(2+) serves as cofactor.

The catalysed reaction is UMP + diphosphate = 5-phospho-alpha-D-ribose 1-diphosphate + uracil. It participates in pyrimidine metabolism; UMP biosynthesis via salvage pathway; UMP from uracil: step 1/1. Its activity is regulated as follows. Allosterically activated by GTP. Catalyzes the conversion of uracil and 5-phospho-alpha-D-ribose 1-diphosphate (PRPP) to UMP and diphosphate. This is Uracil phosphoribosyltransferase from Streptococcus pneumoniae (strain ATCC BAA-255 / R6).